A 34-amino-acid polypeptide reads, in one-letter code: GCASRCKAKCAGRRCKGWASASFRGRCYCKCFRC.

Intrachain disulfides connect C2–C27, C6–C29, C10–C31, and C15–C34.

It is found in the secreted. Has antibacterial activity against A.viridans, B.megaterium, M.luteus, E.faecalis, S.aureus and E.coli. It is active against the marine species A.carrageenovora, P.alginovora and C.drobachiensis. The polypeptide is Mytilin-A (Mytilus edulis (Blue mussel)).